The chain runs to 430 residues: Adenylosuccinate synthetase (430 aa).

Residues 17-23 (GDEGKGK) and 45-47 (GHT) contribute to the GTP site. Asp-18 (proton acceptor) is an active-site residue. Residues Asp-18 and Gly-45 each coordinate Mg(2+). IMP-binding positions include 18–21 (DEGK), 43–46 (NAGH), Thr-139, Arg-153, Asn-229, Thr-244, and Arg-308. His-46 acts as the Proton donor in catalysis. 304–310 (TVTGRRR) contributes to the substrate binding site. Residues Arg-310, 336 to 338 (KLD), and 418 to 420 (GVG) contribute to the GTP site.

It belongs to the adenylosuccinate synthetase family. Homodimer. Mg(2+) serves as cofactor.

Its subcellular location is the cytoplasm. It catalyses the reaction IMP + L-aspartate + GTP = N(6)-(1,2-dicarboxyethyl)-AMP + GDP + phosphate + 2 H(+). It participates in purine metabolism; AMP biosynthesis via de novo pathway; AMP from IMP: step 1/2. Functionally, plays an important role in the de novo pathway and in the salvage pathway of purine nucleotide biosynthesis. Catalyzes the first committed step in the biosynthesis of AMP from IMP. In Cryptococcus neoformans var. neoformans serotype D (strain B-3501A) (Filobasidiella neoformans), this protein is Adenylosuccinate synthetase.